The sequence spans 449 residues: Na(+)/H(+) antiporter NhaA 2 (449 aa).

11 helical membrane-spanning segments follow: residues Ile32–Asn52, Gly87–Gly107, Met114–Leu134, Gly145–Gly165, Val174–Gly194, Thr202–Val222, Ala233–Leu253, Trp318–Ile338, Leu347–Leu367, Trp382–Ile402, and Leu417–Leu437.

Belongs to the NhaA Na(+)/H(+) (TC 2.A.33) antiporter family.

The protein resides in the cell inner membrane. It catalyses the reaction Na(+)(in) + 2 H(+)(out) = Na(+)(out) + 2 H(+)(in). Its function is as follows. Na(+)/H(+) antiporter that extrudes sodium in exchange for external protons. The protein is Na(+)/H(+) antiporter NhaA 2 of Acidiphilium cryptum (strain JF-5).